A 548-amino-acid polypeptide reads, in one-letter code: Leucine-rich repeat LGI family member 3 (548 aa).

An N-terminal signal peptide occupies residues 1–30; sequence MAGLRARRGPGRRLLVLSTLGFCLMLQVSA. In terms of domain architecture, LRRNT spans 31–64; it reads KRPPKTPPCPPSCSCTRDTAFCVDSKSVPKNLPS. 3 LRR repeats span residues 89-110, 113-134, and 137-158; these read LLQF…AFIG, HLQY…TFRG, and SLTH…IFRP. Residues 170 to 220 form the LRRCT domain; it reads NALNCDCKVKWLVEWLAHTNTTVAPIYCASPPRFQEHKVQDLPLREFDCIT. Asn-189 carries N-linked (GlcNAc...) asparagine glycosylation. EAR repeat units follow at residues 222–264 and 268–310; these read DFVL…KWDY and QLRD…HWDP. Asn-311 carries an N-linked (GlcNAc...) asparagine glycan. EAR repeat units lie at residues 314-361, 363-406, 410-453, 455-497, and 501-543; these read RFTK…RWHQ, GFYS…QWSR, QFVA…RWEG, RFSE…QWDE, and KFVR…RHVV.

Interacts with STX1A. Brain.

The protein localises to the secreted. The protein resides in the cytoplasmic vesicle. It is found in the secretory vesicle. It localises to the synaptic vesicle. Its subcellular location is the synapse. The protein localises to the synaptosome. The protein resides in the cell projection. It is found in the axon. Its function is as follows. May participate in the regulation of neuronal exocytosis. In Mus musculus (Mouse), this protein is Leucine-rich repeat LGI family member 3 (Lgi3).